A 613-amino-acid chain; its full sequence is Potassium voltage-gated channel subfamily A member 5 (613 aa).

Positions 1-108 (MEIALVPLEN…EGDPGLGTVE (108 aa)) are disordered. The interval 1–211 (MEIALVPLEN…FYQLGDEAME (211 aa)) is tetramerization domain. The Cytoplasmic segment spans residues 1–247 (MEIALVPLEN…LIFEYPESSG (247 aa)). The segment covering 45–62 (GPKEPAPKGRGAQRDADS) has biased composition (basic and acidic residues). 2 consecutive repeat copies span residues 61–71 (DSGVRPLPPLP) and 72–82 (DPGVRPLPPLP). The tract at residues 61-82 (DSGVRPLPPLPDPGVRPLPPLP) is 2 X 11 AA tandem repeat of D-[SP]-G-V-R-P-L-P-P-L-P. The segment covering 66 to 83 (PLPPLPDPGVRPLPPLPE) has biased composition (pro residues). Basic and acidic residues predominate over residues 84 to 93 (ELPRPRRPPP). Lys221 is covalently cross-linked (Glycyl lysine isopeptide (Lys-Gly) (interchain with G-Cter in SUMO)). Residues 248-269 (SARAIAIVSVLVILISIITFCL) traverse the membrane as a helical segment. Over 270–323 (ETLPEFRDERELLRHPPAPHQPPAPAPGANGSGVMAPPSGPTVAPLLPRTLADP) the chain is Extracellular. A disordered region spans residues 282-304 (LRHPPAPHQPPAPAPGANGSGVM). Pro residues predominate over residues 285–295 (PPAPHQPPAPA). Residues 324–345 (FFIVETTCVIWFTFELLVRFFA) traverse the membrane as a helical segment. Cys346 is lipidated: S-palmitoyl cysteine. Topologically, residues 346–356 (CPSKAGFSRNI) are cytoplasmic. Residues 357-377 (MNIIDVVAIFPYFITLGTELA) form a helical membrane-spanning segment. Residues 378–395 (EQQPGGGGGGQNGQQAMS) are Extracellular-facing. The chain crosses the membrane as a helical; Voltage-sensor span at residues 396 to 416 (LAILRVIRLVRVFRIFKLSRH). Topologically, residues 417–431 (SKGLQILGKTLQASM) are cytoplasmic. Residues 418–431 (KGLQILGKTLQASM) are S4-S5 linker. A helical transmembrane segment spans residues 432-453 (RELGLLIFFLFIGVILFSSAVY). At 454–467 (FAEADNQGTHFSSI) the chain is on the extracellular side. The segment at residues 468 to 479 (PDAFWWAVVTMT) is an intramembrane region (helical). Positions 480-485 (TVGYGD) match the Selectivity filter motif. The stretch at 480–487 (TVGYGDMR) is an intramembrane region. Residues 488–494 (PITVGGK) are Extracellular-facing. Residues 495–523 (IVGSLCAIAGVLTIALPVPVIVSNFNYFY) traverse the membrane as a helical segment. At 524–613 (HRETDHEEPA…CLDTSRETDL (90 aa)) the chain is on the cytoplasmic side. A disordered region spans residues 532-559 (PAVLKEEQGTQSQGPGLDRGVQRKVSGS). Lys536 participates in a covalent cross-link: Glycyl lysine isopeptide (Lys-Gly) (interchain with G-Cter in SUMO). The residue at position 557 (Ser557) is a Phosphoserine; by PKA. Residues 611 to 613 (TDL) carry the PDZ-binding motif.

Belongs to the potassium channel family. A (Shaker) (TC 1.A.1.2) subfamily. Kv1.5/KCNA5 sub-subfamily. In terms of assembly, homotetramer and heterotetramer of potassium channel proteins. Interacts with DLG1, which enhances channel currents. Forms a ternary complex with DLG1 and CAV3. Interacts with KCNAB1. Interacts with UBE2I. Interacts with XIRP2; the interaction is required for normal action potential configuration in the heart. Post-translationally, glycosylated. Sumoylated on Lys-221, and Lys-536, preferentially with SUMO3. Sumoylation regulates the voltage sensitivity of the channel. Pancreatic islets and insulinoma.

It is found in the cell membrane. It catalyses the reaction K(+)(in) = K(+)(out). Inhibited by 4-aminopyridine, nicotine, bepridil, correolide, and endothelin-1. Its function is as follows. Voltage-gated potassium channel that mediates transmembrane potassium transport in excitable membranes. Forms tetrameric potassium-selective channels through which potassium ions pass in accordance with their electrochemical gradient. The channel alternates between opened and closed conformations in response to the voltage difference across the membrane. Can form functional homotetrameric channels and heterotetrameric channels that contain variable proportions of KCNA1, KCNA2, KCNA4, KCNA5, and possibly other family members as well; channel properties depend on the type of alpha subunits that are part of the channel. Channel properties are modulated by cytoplasmic beta subunits that regulate the subcellular location of the alpha subunits and promote rapid inactivation. Homotetrameric channels display rapid activation and slow inactivation. Required for normal electrical conduction including formation of the infranodal ventricular conduction system and normal action potential configuration, as a result of its interaction with XIRP2. May play a role in regulating the secretion of insulin in normal pancreatic islets. In terms of biological role, exhibits a faster depolarization rate, reduced voltage-dependent recovery from inactivation and an excessive cumulative inactivation. The sequence is that of Potassium voltage-gated channel subfamily A member 5 (KCNA5) from Homo sapiens (Human).